Reading from the N-terminus, the 21-residue chain is Thioredoxin (21 aa).

At Lys3 the chain carries N6-acetyllysine. An N6-succinyllysine modification is found at Lys8.

It belongs to the thioredoxin family. As to quaternary structure, homodimer; disulfide-linked. Interacts with TXNIP through the redox-active site. Interacts with MAP3K5 and CASP3. Interacts with APEX1; the interaction stimulates the FOS/JUN AP-1 DNA-binding activity in a redox-dependent manner.

It localises to the nucleus. The protein resides in the cytoplasm. The protein localises to the secreted. Participates in various redox reactions through the reversible oxidation of its active center dithiol to a disulfide and catalyzes dithiol-disulfide exchange reactions. Plays a role in the reversible S-nitrosylation of cysteine residues in target proteins, and thereby contributes to the response to intracellular nitric oxide. Nitrosylates the active site Cys of CASP3 in response to nitric oxide (NO), and thereby inhibits caspase-3 activity. Induces the FOS/JUN AP-1 DNA binding activity in ionizing radiation (IR) cells through its oxidation/reduction status and stimulates AP-1 transcriptional activity. In Canis lupus familiaris (Dog), this protein is Thioredoxin (TXN).